The primary structure comprises 191 residues: Cytochrome c oxidase subunit 6b-1 (191 aa).

Over residues Met1–Glu14 the composition is skewed to polar residues. Residues Met1–Phe126 form a disordered region. N-acetylalanine is present on Ala2. Composition is skewed to basic and acidic residues over residues Tyr16–Ala37 and Glu45–Ser56. Over residues Ala72–Glu98 the composition is skewed to low complexity. Residues Glu99 to Pro114 are compositionally biased toward acidic residues. A CHCH domain is found at Thr134–Trp177. Positions Cys137–Cys147 match the Cx9C motif motif. 2 disulfides stabilise this stretch: Cys137-Cys169 and Cys147-Cys158. The short motif at Cys158–Cys169 is the Cx10C motif element.

This sequence belongs to the cytochrome c oxidase subunit 6B (TC 3.D.4.8) family. In terms of tissue distribution, expressed in the whole plant.

The protein localises to the mitochondrion. In terms of biological role, this protein is one of the nuclear-coded polypeptide chains of cytochrome c oxidase, the terminal oxidase in mitochondrial electron transport. This protein may be one of the heme-binding subunits of the oxidase. The polypeptide is Cytochrome c oxidase subunit 6b-1 (COX6B-1) (Arabidopsis thaliana (Mouse-ear cress)).